A 77-amino-acid polypeptide reads, in one-letter code: UPF0291 protein EAT1b_0405 (77 aa).

Residues 53–77 form a disordered region; that stretch reads KVVDPDGNDVTPEKLKEDQKRYRGE. The segment covering 63-77 has biased composition (basic and acidic residues); it reads TPEKLKEDQKRYRGE.

This sequence belongs to the UPF0291 family.

The protein localises to the cytoplasm. The polypeptide is UPF0291 protein EAT1b_0405 (Exiguobacterium sp. (strain ATCC BAA-1283 / AT1b)).